Consider the following 397-residue polypeptide: G2/mitotic-specific cyclin-B1 (397 aa).

This sequence belongs to the cyclin family. Cyclin AB subfamily. In terms of assembly, interacts with the cdc2 protein kinase to form a serine/threonine kinase holoenzyme complex also known as maturation promoting factor (MPF). The cyclin subunit imparts substrate specificity to the complex. When not in a complex with cdc2, interacts with spdya. Interacts with nap1l1. Interacts with nanos1.

Its subcellular location is the cytoplasm. The protein resides in the cytoskeleton. It localises to the microtubule organizing center. It is found in the centrosome. The protein localises to the nucleus. Functionally, essential for the control of the cell cycle at the G2/M (mitosis) transition. This Xenopus laevis (African clawed frog) protein is G2/mitotic-specific cyclin-B1 (ccnb1).